Consider the following 542-residue polypeptide: Heterogeneous nuclear ribonucleoprotein L-like (542 aa).

Residues 1 to 71 (MSSSSSSPRE…QPEAGGSHHK (71 aa)) form a disordered region. The span at 18–29 (YESQAKRLKTEE) shows a compositional bias: basic and acidic residues. Residue lysine 26 forms a Glycyl lysine isopeptide (Lys-Gly) (interchain with G-Cter in SUMO2) linkage. The residue at position 35 (serine 35) is a Phosphoserine. At threonine 46 the chain carries Phosphothreonine. Over residues 48-58 (RGGGDGGGGGR) the composition is skewed to gly residues. Phosphoserine is present on residues serine 59, serine 68, and serine 75. 3 RRM domains span residues 76-150 (PVVH…YSTS), 166-244 (NKVL…YARP), and 335-409 (SVVM…VSKQ). Lysine 491 participates in a covalent cross-link: Glycyl lysine isopeptide (Lys-Gly) (interchain with G-Cter in SUMO2).

Interacts with HNRNPL. As to expression, widely expressed. Detected in bone marrow stroma cells, skeletal muscle, heart, placenta, pancreas, kidney and lung.

RNA-binding protein that functions as a regulator of alternative splicing for multiple target mRNAs, including PTPRC/CD45 and STAT5A. Required for alternative splicing of PTPRC. The sequence is that of Heterogeneous nuclear ribonucleoprotein L-like (HNRNPLL) from Homo sapiens (Human).